A 387-amino-acid polypeptide reads, in one-letter code: Paralemmin-1 (387 aa).

At methionine 1 the chain carries N-acetylmethionine. Residues glutamate 7–leucine 104 are a coiled coil. Disordered regions lie at residues arginine 22 to glutamate 78 and leucine 98 to alanine 133. 2 stretches are compositionally biased toward basic and acidic residues: residues glutamine 25 to glutamine 41 and aspartate 69 to glutamate 78. Position 116 is a phosphoserine (serine 116). The span at serine 116 to cysteine 125 shows a compositional bias: pro residues. Phosphothreonine is present on residues threonine 142 and threonine 146. Phosphoserine is present on serine 163. Threonine 244 is modified (phosphothreonine). Serine 246 carries the phosphoserine modification. Disordered stretches follow at residues serine 246–proline 297 and alanine 334–lysine 378. Positions glycine 258–isoleucine 273 are enriched in basic and acidic residues. The segment covering glycine 286–proline 297 has biased composition (low complexity). Phosphoserine is present on residues serine 346 and serine 369. Residues cysteine 381 and cysteine 383 are each lipidated (S-palmitoyl cysteine). Cysteine methyl ester is present on cysteine 384. A lipid anchor (S-farnesyl cysteine) is attached at cysteine 384. The propeptide at serine 385–methionine 387 is removed in mature form.

The protein belongs to the paralemmin family. As to quaternary structure, interacts with dopamine receptor DRD3. In terms of processing, phosphorylated.

Its subcellular location is the cell membrane. The protein localises to the cell projection. It localises to the filopodium membrane. It is found in the axon. The protein resides in the dendrite. Its subcellular location is the dendritic spine. The protein localises to the basolateral cell membrane. It localises to the apicolateral cell membrane. Functionally, involved in plasma membrane dynamics and cell process formation. Necessary for axonal and dendritic filopodia induction, for dendritic spine maturation and synapse formation in a palmitoylation-dependent manner. In Sus scrofa (Pig), this protein is Paralemmin-1 (PALM).